We begin with the raw amino-acid sequence, 648 residues long: p-hydroxybenzoic acid efflux pump subunit AaeB (648 aa).

A run of 11 helical transmembrane segments spans residues 11 to 31, 41 to 61, 65 to 87, 91 to 110, 125 to 145, 150 to 170, 369 to 389, 406 to 426, 430 to 450, 455 to 474, and 481 to 501; these read FACKLTLAIVLSLLLGFYFGL, AALVAAGPAFAAGGEPFAGAI, GWLRIIGTVLGSLCALLLMMLLI, LLMILLCCLWAGVCTWLSSL, TALIIVVSCLGEPQFILQLAL, EIVLGIACAVLADTLLAPRSV, LFWLWSGWNAGSGCMIMIAVV, FLMGSLVALPVGALYYTVILP, QSLVLLCLSLGALTFICGMEV, LGSLGTLASTLNILVLSNPM, and FVDSAIGQVIGCLLALVVLLA.

Belongs to the aromatic acid exporter ArAE (TC 2.A.85) family.

It localises to the cell inner membrane. Forms an efflux pump with AaeA. Could function as a metabolic relief valve, allowing to eliminate certain compounds when they accumulate to high levels in the cell. This is p-hydroxybenzoic acid efflux pump subunit AaeB (aaeB) from Edwardsiella tarda (strain FL6-60).